The sequence spans 143 residues: Nucleoside diphosphate kinase (143 aa).

Residues Lys-11, Phe-59, Arg-87, Thr-93, Arg-104, and Asn-114 each coordinate ATP. His-117 acts as the Pros-phosphohistidine intermediate in catalysis.

This sequence belongs to the NDK family. In terms of assembly, homotetramer. It depends on Mg(2+) as a cofactor.

Its subcellular location is the cytoplasm. It catalyses the reaction a 2'-deoxyribonucleoside 5'-diphosphate + ATP = a 2'-deoxyribonucleoside 5'-triphosphate + ADP. It carries out the reaction a ribonucleoside 5'-diphosphate + ATP = a ribonucleoside 5'-triphosphate + ADP. Major role in the synthesis of nucleoside triphosphates other than ATP. The ATP gamma phosphate is transferred to the NDP beta phosphate via a ping-pong mechanism, using a phosphorylated active-site intermediate. This is Nucleoside diphosphate kinase from Shewanella sp. (strain W3-18-1).